The chain runs to 91 residues: MRLLKPLVALPTYCLVLFIRGYQKWISPLLGPHCRFNPTCSSYAIQAINLHGSVKGSWLAVKRILKCHPLHSGGNDPVPEKLTHINHQHEK.

The segment at 72–91 (SGGNDPVPEKLTHINHQHEK) is disordered. Over residues 78 to 91 (VPEKLTHINHQHEK) the composition is skewed to basic and acidic residues.

The protein belongs to the UPF0161 family.

It localises to the cell inner membrane. In terms of biological role, could be involved in insertion of integral membrane proteins into the membrane. The sequence is that of Putative membrane protein insertion efficiency factor from Pseudoalteromonas translucida (strain TAC 125).